Consider the following 134-residue polypeptide: Acyl carrier protein, chloroplastic (134 aa).

Residues 1–51 (MATTFSASVSMQATSLATTTRISFQKPVLVSNHGRTNLSFNLSRTRLSISC) constitute a chloroplast transit peptide. In terms of domain architecture, Carrier spans 55–130 (QETVEKVSEI…QAAELIEELM (76 aa)). S90 carries the O-(pantetheine 4'-phosphoryl)serine modification.

This sequence belongs to the acyl carrier protein (ACP) family. In terms of processing, 4'-phosphopantetheine is transferred from CoA to a specific serine of apo-ACP by acpS. This modification is essential for activity because fatty acids are bound in thioester linkage to the sulfhydryl of the prosthetic group. In terms of tissue distribution, seed.

Its subcellular location is the plastid. It is found in the chloroplast. It functions in the pathway lipid metabolism; fatty acid biosynthesis. Functionally, carrier of the growing fatty acid chain in fatty acid biosynthesis. In Brassica napus (Rape), this protein is Acyl carrier protein, chloroplastic (ACL1.C1).